We begin with the raw amino-acid sequence, 225 residues long: Insulin-induced gene 2 protein (225 aa).

At 1 to 28 (MAEGETESPRPKKCGPYISSVTSQSVNV) the chain is on the cytoplasmic side. Residues 29-51 (VIRGVVLFFIGVFLALVLNLLQI) form a helical membrane-spanning segment. Over 52-70 (QRNVTLFPPDVITSIFSSA) the chain is Lumenal. A helical transmembrane segment spans residues 71-88 (WWVPPCCGTASAVIGLLY). Residues 89–103 (PCIDRHLGEPHKFKR) are Cytoplasmic-facing. The chain crosses the membrane as a helical span at residues 104 to 126 (EWSSVMRCVAVFVGINHASAKVD). The Lumenal portion of the chain corresponds to 127 to 129 (FDN). A helical transmembrane segment spans residues 130–148 (NFQFSLTLAALSVGLWWTF). The Cytoplasmic portion of the chain corresponds to 149 to 153 (DRSRS). The residue at position 151 (Ser151) is a Phosphoserine. A helical membrane pass occupies residues 154–175 (GFGLGVGIAFLATVVTQLLVYN). The Lumenal segment spans residues 176-189 (GVYQYTSPDFLYVR). A helical membrane pass occupies residues 190-207 (SWLPCIFFAGGITMGNIG). The Cytoplasmic portion of the chain corresponds to 208–225 (RQLAMYECKVIAEKSHQE). Cys215 carries the post-translational modification Cysteine sulfenic acid (-SOH); alternate. A Glycyl cysteine thioester (Cys-Gly) (interchain with G-Cter in ubiquitin); alternate cross-link involves residue Cys215. Residues 219 to 225 (AEKSHQE) carry the KxHxx motif.

The protein belongs to the INSIG family. Interacts with SCAP; interaction is direct and only takes place in the presence of sterols; it prevents interaction between SCAP and the coat protein complex II (COPII). Associates with the SCAP-SREBP complex (composed of SCAP and SREBF1/SREBP1 or SREBF2/SREBP2); association is mediated via its interaction with SCAP and only takes place in the presence of sterols. Interacts with RNF139. Interacts with RNF145. Phosphorylation at Ser-151 by PCK1 reduces binding to oxysterol, disrupting the interaction between INSIG2 and SCAP, thereby promoting nuclear translocation of SREBP proteins (SREBF1/SREBP1 or SREBF2/SREBP2) and subsequent transcription of downstream lipogenesis-related genes. In terms of processing, polyubiquitinated by AMFR/gp78 at Cys-215 in some tissues such as adipose tissues, undifferentiated myoblasts and liver, leading to its degradation. In differentiated myotubes, Cys-215 oxidation prevents ubiquitination at the same site, resulting in protein stabilization. Post-translationally, oxidized at Cys-215 in differentiated myotubes, preventing ubiquitination at the same site, and resulting in protein stabilization. Expressed in liver, testis, kidney, spleen, intestine, brain and adrenal gland.

The protein localises to the endoplasmic reticulum membrane. Its function is as follows. Oxysterol-binding protein that mediates feedback control of cholesterol synthesis by controlling both endoplasmic reticulum to Golgi transport of SCAP and degradation of HMGCR. Acts as a negative regulator of cholesterol biosynthesis by mediating the retention of the SCAP-SREBP complex in the endoplasmic reticulum, thereby blocking the processing of sterol regulatory element-binding proteins (SREBPs) SREBF1/SREBP1 and SREBF2/SREBP2. Binds oxysterol, including 22-hydroxycholesterol, 24-hydroxycholesterol, 25-hydroxycholesterol and 27-hydroxycholesterol, regulating interaction with SCAP and retention of the SCAP-SREBP complex in the endoplasmic reticulum. In presence of oxysterol, interacts with SCAP, retaining the SCAP-SREBP complex in the endoplasmic reticulum, thereby preventing SCAP from escorting SREBF1/SREBP1 and SREBF2/SREBP2 to the Golgi. Sterol deprivation or phosphorylation by PCK1 reduce oxysterol-binding, disrupting the interaction between INSIG2 and SCAP, thereby promoting Golgi transport of the SCAP-SREBP complex, followed by processing and nuclear translocation of SREBF1/SREBP1 and SREBF2/SREBP2. Also regulates cholesterol synthesis by regulating degradation of HMGCR: initiates the sterol-mediated ubiquitin-mediated endoplasmic reticulum-associated degradation (ERAD) of HMGCR via recruitment of the reductase to the ubiquitin ligase RNF139. The sequence is that of Insulin-induced gene 2 protein from Mus musculus (Mouse).